We begin with the raw amino-acid sequence, 1207 residues long: Systemin receptor SR160 (1207 aa).

Residues 1 to 34 (MKAHKTVFNQHPLSLNKLFFVLLLIFFLPPASPA) form the signal peptide. The Cys pair 1 motif lies at 71-78 (CSFTGVSC). LRR repeat units follow at residues 109–131 (NLESLVLKNANLSGSLTSAAKSQ), 135–157 (TLDSIDLAENTISGPISDISSFG), 161–181 (NLKSLNLSKNFLDPPGKEMLK), 186–207 (SLQVLDLSYNNISGFNLFPWVS), 213–234 (ELEFFSIKGNKLAGSIPELDFK), 235–257 (NLSYLDLSANNFSTVFPSFKDCS), 258–280 (NLQHLDLSSNKFYGDIGSSLSSC), 282–304 (KLSFLNLTNNQFVGLVPKLPSES), 305–325 (LQYLYLRGNDFQGVYPNQLAD), 329–350 (TVVELDLSYNNFSGMVPESLGE), 353–375 (SLELVDISNNNFSGKLPVDTLLK), 378–401 (NIKTMVLSFNKFVGGLPDSFSNLP), 402–423 (KLETLDMSSNNLTGIIPSGICK), 428–450 (NLKVLYLQNNLFKGPIPDSLSNC), 452–474 (QLVSLDLSFNYLTGSIPSSLGSL), 476–499 (KLKDLILWLNQLSGEIPQELMYLQ), 500–523 (ALENLILDFNDLTGPIPASLSNCT), 524–547 (KLNWISLSNNQLSGEIPASLGRLS), 548–570 (NLAILKLGNNSISGNIPAELGNC), and 572–594 (SLIWLDLNTNFLNGSIPPPLFKQ). A glycan (N-linked (GlcNAc...) asparagine) is linked at N119. Residues N166 and N196 are each glycosylated (N-linked (GlcNAc...) asparagine). N-linked (GlcNAc...) asparagine glycosylation is found at N235 and N245. N287 carries an N-linked (GlcNAc...) asparagine glycan. N-linked (GlcNAc...) asparagine glycosylation is found at N339 and N363. N-linked (GlcNAc...) asparagine glycans are attached at residues N412 and N449. N-linked (GlcNAc...) asparagine glycosylation occurs at N521. 4 N-linked (GlcNAc...) asparagine glycosylation sites follow: N556, N584, N646, and N662. 4 LRR repeats span residues 664–686 (SMIFLDLSYNKLEGSIPKELGAM), 688–711 (YLSILNLGHNDLSGMIPQQLGGLK), 712–735 (NVAILDLSYNRFNGTIPNSLTSLT), and 736–758 (LLGEIDLSNNNLSGMIPESAPFD). N724, N746, and N767 each carry an N-linked (GlcNAc...) asparagine glycan. The short motif at 771–779 (CGYPLPLPC) is the Cys pair 2 element. A helical transmembrane segment spans residues 803–823 (SVAMGLLFSLFCIFGLIIVAI). The Protein kinase domain occupies 888–1163 (FHNDSLVGSG…IQVMAMFKEI (276 aa)). Residues 894 to 902 (VGSGGFGDV) and K916 each bind ATP. Residue D1014 is the Proton acceptor of the active site.

Belongs to the protein kinase superfamily. Ser/Thr protein kinase family. Post-translationally, glycosylated.

The protein localises to the cell membrane. It carries out the reaction L-seryl-[protein] + ATP = O-phospho-L-seryl-[protein] + ADP + H(+). It catalyses the reaction L-threonyl-[protein] + ATP = O-phospho-L-threonyl-[protein] + ADP + H(+). Its function is as follows. Receptor with a serine/threonine-protein kinase activity. Involved in the perception of systemin, a peptide hormone responsible for the systemic activation of defense genes in leaves of wounded plants. May also regulate, in response to brassinosteroid binding, a signaling cascade involved in plant development. The chain is Systemin receptor SR160 from Solanum peruvianum (Peruvian tomato).